A 203-amino-acid chain; its full sequence is MTVKEKKIIDQYVPIVVESTGRYERAYDIFSRLLKDRIVFLGSPIDDYVANLVIAQLLFLEAEDPDKDVYLYINSPGGSVTAGLAIYDTMQYIKCDVSTICVGQAASMAAVLLAAGAKGKRYALPNARIMIHQPLGGAEGPAKDVEIITRELLRIKDLLNRILSKHTGQPIEKIEKDTDRDFFMSAEEAKEYGIVDKVVSTRE.

Catalysis depends on Ser-107, which acts as the Nucleophile. The active site involves His-132.

Belongs to the peptidase S14 family. As to quaternary structure, fourteen ClpP subunits assemble into 2 heptameric rings which stack back to back to give a disk-like structure with a central cavity, resembling the structure of eukaryotic proteasomes.

The protein localises to the cytoplasm. It carries out the reaction Hydrolysis of proteins to small peptides in the presence of ATP and magnesium. alpha-casein is the usual test substrate. In the absence of ATP, only oligopeptides shorter than five residues are hydrolyzed (such as succinyl-Leu-Tyr-|-NHMec, and Leu-Tyr-Leu-|-Tyr-Trp, in which cleavage of the -Tyr-|-Leu- and -Tyr-|-Trp bonds also occurs).. Cleaves peptides in various proteins in a process that requires ATP hydrolysis. Has a chymotrypsin-like activity. Plays a major role in the degradation of misfolded proteins. The sequence is that of ATP-dependent Clp protease proteolytic subunit from Thermotoga maritima (strain ATCC 43589 / DSM 3109 / JCM 10099 / NBRC 100826 / MSB8).